The following is a 239-amino-acid chain: Segregation and condensation protein A (239 aa).

The protein belongs to the ScpA family. In terms of assembly, component of a cohesin-like complex composed of ScpA, ScpB and the Smc homodimer, in which ScpA and ScpB bind to the head domain of Smc. The presence of the three proteins is required for the association of the complex with DNA.

Its subcellular location is the cytoplasm. Its function is as follows. Participates in chromosomal partition during cell division. May act via the formation of a condensin-like complex containing Smc and ScpB that pull DNA away from mid-cell into both cell halves. The chain is Segregation and condensation protein A from Streptococcus suis (strain 98HAH33).